Consider the following 422-residue polypeptide: MKTSYNLRSIAAKAIAQVLDQGLSLSSVIPELQKNISDKDKALLQELCFGTLRTLPQLEWIIQQLMDKPLKGKQRILHYLIMVGLYQLLYTRVPAHAALAETVNGAIALKKPQLKGLINGVLRQFQRQQDVLMERFQNNDSRYLHPSWLLTRIKNAYPELWESIIEGNNQKPPMWLRVNQIHHSREQYLALLEKEGISAFSDDHHPNAIRLETPCNVHLLPGFNEGWVTVQDRSAQRCAELLAPQNNEQILDLCAAPGGKTTHILEIAPKAHVLAIDIDEQRLARVKENLNRLKLHATVKSGDGRYPEQWCANMQFDRILLDAPCSATGVIRRHPDIKWLRRNEDIAQLAQIQKEILHAIWPYLKSGGTLVYATCSILPEENSQQIAAFLSSMQDAQCDYQHQCLPEQYSGDGFFYALINKK.

S-adenosyl-L-methionine-binding positions include 254-260 (CAAPGGK), Asp-277, Asp-303, and Asp-322. The active-site Nucleophile is the Cys-375.

It belongs to the class I-like SAM-binding methyltransferase superfamily. RsmB/NOP family.

It localises to the cytoplasm. The enzyme catalyses cytidine(967) in 16S rRNA + S-adenosyl-L-methionine = 5-methylcytidine(967) in 16S rRNA + S-adenosyl-L-homocysteine + H(+). Its function is as follows. Specifically methylates the cytosine at position 967 (m5C967) of 16S rRNA. This Proteus mirabilis (strain HI4320) protein is Ribosomal RNA small subunit methyltransferase B.